Reading from the N-terminus, the 590-residue chain is Complement component C8 beta chain (590 aa).

A signal peptide spans 1 to 32 (MKKSWTWTWRVPAELLLLCAALGCLCVPGSRS). The propeptide occupies 33-54 (ERPRSLEPTVVNRSLAKSRHSR). An N-linked (GlcNAc...) asparagine glycan is attached at Asn-44. One can recognise a TSP type-1 1 domain in the interval 64–117 (DCELSSWSSWTMCDPCQKKRYRHAYLLRPSQFNGEPCNFSDKEVEDCATSRPCR). 7 disulfides stabilise this stretch: Cys-65–Cys-100, Cys-76–Cys-110, Cys-79–Cys-116, Cys-122–Cys-133, Cys-127–Cys-146, Cys-140–Cys-155, and Cys-162–Cys-200. 2 C-linked (Man) tryptophan glycosylation sites follow: Trp-70 and Trp-73. Asn-101 carries an N-linked (GlcNAc...) asparagine glycan. Residues 120 to 157 (VRCEGFVCAQTGRCVNRRLLCNGDNDCGDQSDEANCRK) form the LDL-receptor class A domain. Positions 138, 141, 143, 145, 151, and 152 each coordinate Ca(2+). Positions 158–504 (IYKKCHHEME…EFQGEVSPCR (347 aa)) constitute an MACPF domain. The next 4 beta stranded transmembrane spans lie at 252-259 (STFNLGFK), 262-269 (SIFEFGIN), 379-386 (AKNDFKLG), and 392-399 (VYVSLGVS). Cys-378 and Cys-403 are oxidised to a cystine. Position 418 is a phosphothreonine (Thr-418). Cystine bridges form between Cys-503–Cys-550, Cys-505–Cys-521, Cys-508–Cys-523, and Cys-525–Cys-534. In terms of domain architecture, EGF-like spans 505-535 (CAPCQGNGVPVQKGSRCDCICPVGFQGSACE). A TSP type-1 2 domain is found at 545–588 (DGRWSCWSRWSSCSGGQKTRRRQCNNPAPQDGGSPCSGPASETL). Trp-551 and Trp-554 each carry a C-linked (Man) tryptophan glycan. A disulfide bridge connects residues Cys-557 and Cys-590. The interval 557 to 590 (CSGGQKTRRRQCNNPAPQDGGSPCSGPASETLAC) is disordered.

The protein belongs to the complement C6/C7/C8/C9 family. In terms of assembly, heterotrimer of 3 chains: alpha (C8A), beta (C8B) and gamma (C8G); the alpha and gamma chains are disulfide bonded. Component of the membrane attack complex (MAC), composed of complement C5b, C6, C7, C8A, C8B, C8G and multiple copies of the pore-forming subunit C9. In terms of processing, N-glycosylated; contains one or two bound glycans. Not O-glycosylated.

The protein localises to the secreted. Its subcellular location is the target cell membrane. Its activity is regulated as follows. Membrane attack complex (MAC) assembly is inhibited by CD59, thereby protecting self-cells from damage during complement activation. CD59 acts by binding to the beta-haipins of C8 (C8A and C8B), forming an intermolecular beta-sheet that prevents incorporation of the multiple copies of C9 required for complete formation of the osmolytic pore. MAC assembly is also inhibited by clusterin (CLU) chaperones that inhibit polymerization of C9. Component of the membrane attack complex (MAC), a multiprotein complex activated by the complement cascade, which inserts into a target cell membrane and forms a pore, leading to target cell membrane rupture and cell lysis. The MAC is initiated by proteolytic cleavage of C5 into complement C5b in response to the classical, alternative, lectin and GZMK complement pathways. The complement pathways consist in a cascade of proteins that leads to phagocytosis and breakdown of pathogens and signaling that strengthens the adaptive immune system. C8B, together with C8A and C8G, inserts into the target membrane, but does not form pores by itself. During MAC assembly, associates with C5b, C6 and C7 to form the C5b8 intermediate complex that inserts into the target membrane and traverses the bilayer increasing membrane rigidity. The polypeptide is Complement component C8 beta chain (C8B) (Oryctolagus cuniculus (Rabbit)).